A 912-amino-acid chain; its full sequence is Protein translocase subunit SecA (912 aa).

Residues Gln-87, 105–109 (GEGKT), and Asp-508 each bind ATP. The disordered stretch occupies residues 855–912 (QHQDAGGYGADEEVEQMQGGNAPVPVSQVTRDEPKVGRNDPCPCGSGKKYKHCHGQLS). Zn(2+) contacts are provided by Cys-896, Cys-898, Cys-907, and His-908. Residues 902 to 912 (KKYKHCHGQLS) show a composition bias toward basic residues.

This sequence belongs to the SecA family. In terms of assembly, monomer and homodimer. Part of the essential Sec protein translocation apparatus which comprises SecA, SecYEG and auxiliary proteins SecDF-YajC and YidC. Requires Zn(2+) as cofactor.

The protein localises to the cell inner membrane. It localises to the cytoplasm. The catalysed reaction is ATP + H2O + cellular proteinSide 1 = ADP + phosphate + cellular proteinSide 2.. In terms of biological role, part of the Sec protein translocase complex. Interacts with the SecYEG preprotein conducting channel. Has a central role in coupling the hydrolysis of ATP to the transfer of proteins into and across the cell membrane, serving both as a receptor for the preprotein-SecB complex and as an ATP-driven molecular motor driving the stepwise translocation of polypeptide chains across the membrane. The sequence is that of Protein translocase subunit SecA from Xanthomonas campestris pv. campestris (strain B100).